Consider the following 159-residue polypeptide: 2-C-methyl-D-erythritol 2,4-cyclodiphosphate synthase (159 aa).

Aspartate 8 and histidine 10 together coordinate a divalent metal cation. 4-CDP-2-C-methyl-D-erythritol 2-phosphate is bound by residues 8-10 and 34-35; these read DVH and HS. A divalent metal cation is bound at residue histidine 42. 4-CDP-2-C-methyl-D-erythritol 2-phosphate contacts are provided by residues 56 to 58, 100 to 106, 132 to 135, phenylalanine 139, and arginine 142; these read DIG, AQAPKMA, and TTTE.

It belongs to the IspF family. In terms of assembly, homotrimer. A divalent metal cation serves as cofactor.

The catalysed reaction is 4-CDP-2-C-methyl-D-erythritol 2-phosphate = 2-C-methyl-D-erythritol 2,4-cyclic diphosphate + CMP. It participates in isoprenoid biosynthesis; isopentenyl diphosphate biosynthesis via DXP pathway; isopentenyl diphosphate from 1-deoxy-D-xylulose 5-phosphate: step 4/6. Its function is as follows. Involved in the biosynthesis of isopentenyl diphosphate (IPP) and dimethylallyl diphosphate (DMAPP), two major building blocks of isoprenoid compounds. Catalyzes the conversion of 4-diphosphocytidyl-2-C-methyl-D-erythritol 2-phosphate (CDP-ME2P) to 2-C-methyl-D-erythritol 2,4-cyclodiphosphate (ME-CPP) with a corresponding release of cytidine 5-monophosphate (CMP). The chain is 2-C-methyl-D-erythritol 2,4-cyclodiphosphate synthase from Marinobacter nauticus (strain ATCC 700491 / DSM 11845 / VT8) (Marinobacter aquaeolei).